The following is a 417-amino-acid chain: Tol-Pal system protein TolB (417 aa).

The N-terminal stretch at 1–16 is a signal peptide; the sequence is MRYLWLFLIGTIGLFA.

Belongs to the TolB family. The Tol-Pal system is composed of five core proteins: the inner membrane proteins TolA, TolQ and TolR, the periplasmic protein TolB and the outer membrane protein Pal. They form a network linking the inner and outer membranes and the peptidoglycan layer.

Its subcellular location is the periplasm. Part of the Tol-Pal system, which plays a role in outer membrane invagination during cell division and is important for maintaining outer membrane integrity. The chain is Tol-Pal system protein TolB from Helicobacter pylori (strain HPAG1).